A 214-amino-acid polypeptide reads, in one-letter code: Ribonuclease HII (214 aa).

The region spanning 26 to 214 (EIVCGVDEAG…PVREAFDLIR (189 aa)) is the RNase H type-2 domain. Positions 32, 33, and 124 each coordinate a divalent metal cation.

Belongs to the RNase HII family. Requires Mn(2+) as cofactor. The cofactor is Mg(2+).

The protein resides in the cytoplasm. It catalyses the reaction Endonucleolytic cleavage to 5'-phosphomonoester.. In terms of biological role, endonuclease that specifically degrades the RNA of RNA-DNA hybrids. The sequence is that of Ribonuclease HII from Burkholderia pseudomallei (strain 668).